We begin with the raw amino-acid sequence, 106 residues long: Large ribosomal subunit protein bL21 (106 aa).

The protein belongs to the bacterial ribosomal protein bL21 family. Part of the 50S ribosomal subunit. Contacts protein L20.

In terms of biological role, this protein binds to 23S rRNA in the presence of protein L20. The polypeptide is Large ribosomal subunit protein bL21 (Xanthomonas oryzae pv. oryzae (strain MAFF 311018)).